The sequence spans 310 residues: Zinc finger protein-like 1 (310 aa).

Residues 1-43 (MGLCKCPKRKVTNLFCFEHRVNVCEHCLVANHAKCIVQSYLQW) form a B box-type; degenerate zinc finger. Topologically, residues 1–266 (MGLCKCPKRK…RPLTLLQRAG (266 aa)) are cytoplasmic. An RING-type; degenerate zinc finger spans residues 53-101 (CRLCNIPLASRETTRLVCYDLFHWACLNERAAQLPRNTAPAGYQCPSCN). The segment at 145 to 231 (PEPLNTSDFS…RTPGLHGDCD (87 aa)) is disordered. Over residues 148 to 165 (LNTSDFSDWSSFNASSTP) the composition is skewed to polar residues. The span at 213-224 (KVYDTRDDDRTP) shows a compositional bias: basic and acidic residues. The chain crosses the membrane as a helical span at residues 267-287 (LLLLLGLLGFLALLALMSRLG). Topologically, residues 288–310 (RAAADSDPNLDPLMNPHIRVGPS) are lumenal.

It belongs to the ZFPL1 family. As to quaternary structure, interacts with GOLGA2/GM130. Post-translationally, phosphorylated. As to expression, expressed strongly in the exocrine pancreas.

The protein localises to the golgi apparatus. It localises to the cis-Golgi network membrane. Its function is as follows. Required for cis-Golgi integrity and efficient ER to Golgi transport. Involved in the maintenance of the integrity of the cis-Golgi, possibly via its interaction with GOLGA2/GM130. The protein is Zinc finger protein-like 1 (ZFPL1) of Homo sapiens (Human).